Consider the following 196-residue polypeptide: Peptidyl-tRNA hydrolase (196 aa).

Tyrosine 21 lines the tRNA pocket. The active-site Proton acceptor is histidine 26. TRNA is bound by residues phenylalanine 72, asparagine 74, and asparagine 120.

The protein belongs to the PTH family. As to quaternary structure, monomer.

Its subcellular location is the cytoplasm. The catalysed reaction is an N-acyl-L-alpha-aminoacyl-tRNA + H2O = an N-acyl-L-amino acid + a tRNA + H(+). Its function is as follows. Hydrolyzes ribosome-free peptidyl-tRNAs (with 1 or more amino acids incorporated), which drop off the ribosome during protein synthesis, or as a result of ribosome stalling. In terms of biological role, catalyzes the release of premature peptidyl moieties from peptidyl-tRNA molecules trapped in stalled 50S ribosomal subunits, and thus maintains levels of free tRNAs and 50S ribosomes. This chain is Peptidyl-tRNA hydrolase, found in Mycobacteroides abscessus (strain ATCC 19977 / DSM 44196 / CCUG 20993 / CIP 104536 / JCM 13569 / NCTC 13031 / TMC 1543 / L948) (Mycobacterium abscessus).